A 1045-amino-acid polypeptide reads, in one-letter code: Isoleucine--tRNA ligase (1045 aa).

Positions 49–59 (PYCSGRIHLGT) match the 'HIGH' region motif. Residues 591–595 (KMSKS) carry the 'KMSKS' region motif. Lys594 contributes to the ATP binding site.

Belongs to the class-I aminoacyl-tRNA synthetase family. IleS type 2 subfamily. As to quaternary structure, monomer. Zn(2+) serves as cofactor.

The protein localises to the cytoplasm. The catalysed reaction is tRNA(Ile) + L-isoleucine + ATP = L-isoleucyl-tRNA(Ile) + AMP + diphosphate. Catalyzes the attachment of isoleucine to tRNA(Ile). As IleRS can inadvertently accommodate and process structurally similar amino acids such as valine, to avoid such errors it has two additional distinct tRNA(Ile)-dependent editing activities. One activity is designated as 'pretransfer' editing and involves the hydrolysis of activated Val-AMP. The other activity is designated 'posttransfer' editing and involves deacylation of mischarged Val-tRNA(Ile). The protein is Isoleucine--tRNA ligase of Methanothermobacter marburgensis (strain ATCC BAA-927 / DSM 2133 / JCM 14651 / NBRC 100331 / OCM 82 / Marburg) (Methanobacterium thermoautotrophicum).